Reading from the N-terminus, the 160-residue chain is 3-hydroxyacyl-[acyl-carrier-protein] dehydratase FabZ (160 aa).

His59 is a catalytic residue.

Belongs to the thioester dehydratase family. FabZ subfamily.

The protein resides in the cytoplasm. It carries out the reaction a (3R)-hydroxyacyl-[ACP] = a (2E)-enoyl-[ACP] + H2O. In terms of biological role, involved in unsaturated fatty acids biosynthesis. Catalyzes the dehydration of short chain beta-hydroxyacyl-ACPs and long chain saturated and unsaturated beta-hydroxyacyl-ACPs. The protein is 3-hydroxyacyl-[acyl-carrier-protein] dehydratase FabZ of Burkholderia thailandensis (strain ATCC 700388 / DSM 13276 / CCUG 48851 / CIP 106301 / E264).